The chain runs to 346 residues: tRNA N6-adenosine threonylcarbamoyltransferase (346 aa).

The Fe cation site is built by His111 and His115. Substrate-binding positions include 134-138, Asp167, Gly180, and Asn277; that span reads LVSGG. Residue Asp305 participates in Fe cation binding.

Belongs to the KAE1 / TsaD family. Fe(2+) serves as cofactor.

The protein localises to the cytoplasm. It carries out the reaction L-threonylcarbamoyladenylate + adenosine(37) in tRNA = N(6)-L-threonylcarbamoyladenosine(37) in tRNA + AMP + H(+). Functionally, required for the formation of a threonylcarbamoyl group on adenosine at position 37 (t(6)A37) in tRNAs that read codons beginning with adenine. Is involved in the transfer of the threonylcarbamoyl moiety of threonylcarbamoyl-AMP (TC-AMP) to the N6 group of A37, together with TsaE and TsaB. TsaD likely plays a direct catalytic role in this reaction. The chain is tRNA N6-adenosine threonylcarbamoyltransferase from Bordetella pertussis (strain Tohama I / ATCC BAA-589 / NCTC 13251).